A 435-amino-acid polypeptide reads, in one-letter code: ATP-dependent protease ATPase subunit HslU (435 aa).

ATP contacts are provided by residues I18, 60–65, D248, E313, and R385; that span reads GVGKTE.

Belongs to the ClpX chaperone family. HslU subfamily. In terms of assembly, a double ring-shaped homohexamer of HslV is capped on each side by a ring-shaped HslU homohexamer. The assembly of the HslU/HslV complex is dependent on binding of ATP.

Its subcellular location is the cytoplasm. In terms of biological role, ATPase subunit of a proteasome-like degradation complex; this subunit has chaperone activity. The binding of ATP and its subsequent hydrolysis by HslU are essential for unfolding of protein substrates subsequently hydrolyzed by HslV. HslU recognizes the N-terminal part of its protein substrates and unfolds these before they are guided to HslV for hydrolysis. This Roseobacter denitrificans (strain ATCC 33942 / OCh 114) (Erythrobacter sp. (strain OCh 114)) protein is ATP-dependent protease ATPase subunit HslU.